Reading from the N-terminus, the 674-residue chain is Tripartite terminase subunit 3 (674 aa).

Positions 212–219 (VPRRHGKT) match the Walker A motif motif. The Walker B motif signature appears at 305 to 310 (LLLVDE). The active-site For ATPase activity is Glu310. Residues Asp463 and Glu534 each act as for nuclease activity in the active site. The segment at 580-600 (GRDKALAVEQFISRFNSGYIK) is required for interaction with UL56 and DNA packaging. Catalysis depends on Asp651, which acts as the For nuclease activity.

The protein belongs to the herpesviridae TRM3 protein family. As to quaternary structure, interacts with the terminase subunits TRM1 and TRM2. Interacts with portal protein.

The protein localises to the host nucleus. Functionally, component of the molecular motor that translocates viral genomic DNA in empty capsid during DNA packaging. Forms a tripartite terminase complex together with TRM1 and TRM2 in the host cytoplasm. Once the complex reaches the host nucleus, it interacts with the capsid portal vertex. This portal forms a ring in which genomic DNA is translocated into the capsid. TRM3 carries an RNase H-like nuclease activity that plays an important role for the cleavage of concatemeric viral DNA into unit length genomes. In Homo sapiens (Human), this protein is Tripartite terminase subunit 3.